The chain runs to 216 residues: Co-chaperone protein SBA1 (216 aa).

Residue serine 2 is modified to N-acetylserine. Positions valine 5–threonine 108 constitute a CS domain. 2 consecutive repeats follow at residues alanine 141–alanine 156 and glycine 160–alanine 174. The interval glycine 169–alanine 216 is disordered. The span at glutamate 200–alanine 216 shows a compositional bias: acidic residues.

The protein belongs to the p23/wos2 family. In terms of assembly, interacts with HSP82.

Acts as a co-chaperone. The protein is Co-chaperone protein SBA1 (SBA1) of Saccharomyces cerevisiae (strain ATCC 204508 / S288c) (Baker's yeast).